The primary structure comprises 97 residues: Conotoxin Cal6.1b (97 aa).

Positions 1–22 (MKLTTVLVVALLVLAACQFTVT) are cleaved as a signal peptide. A disordered region spans residues 22-46 (TDNSGDDPENPSLRSAGENQNPDST). Residues 23-68 (DNSGDDPENPSLRSAGENQNPDSTKTITAWATRDMTNMRRGLNRPS) constitute a propeptide that is removed on maturation. Cystine bridges form between Cys71/Cys87, Cys78/Cys91, and Cys86/Cys96.

It belongs to the conotoxin O1 superfamily. In terms of tissue distribution, expressed by the venom duct.

Its subcellular location is the secreted. Probable neurotoxin with unknown target. Possibly targets ion channels. This Californiconus californicus (California cone) protein is Conotoxin Cal6.1b.